Reading from the N-terminus, the 629-residue chain is tRNA uridine 5-carboxymethylaminomethyl modification enzyme MnmG (629 aa).

Residues 15–20 (GAGHAG), V127, and S182 each bind FAD. Positions 203–226 (TPPRVKSSTIDYSKTEEQPGDDHP) are disordered. Over residues 215-226 (SKTEEQPGDDHP) the composition is skewed to basic and acidic residues. NAD(+) is bound at residue 274–288 (GARYCPSIEDKIVRF). FAD is bound at residue Q371.

This sequence belongs to the MnmG family. In terms of assembly, homodimer. Heterotetramer of two MnmE and two MnmG subunits. FAD serves as cofactor.

It localises to the cytoplasm. In terms of biological role, NAD-binding protein involved in the addition of a carboxymethylaminomethyl (cmnm) group at the wobble position (U34) of certain tRNAs, forming tRNA-cmnm(5)s(2)U34. The protein is tRNA uridine 5-carboxymethylaminomethyl modification enzyme MnmG of Listeria monocytogenes serovar 1/2a (strain ATCC BAA-679 / EGD-e).